The sequence spans 437 residues: Gamma-glutamyl phosphate reductase (437 aa).

The protein belongs to the gamma-glutamyl phosphate reductase family.

It localises to the cytoplasm. The catalysed reaction is L-glutamate 5-semialdehyde + phosphate + NADP(+) = L-glutamyl 5-phosphate + NADPH + H(+). The protein operates within amino-acid biosynthesis; L-proline biosynthesis; L-glutamate 5-semialdehyde from L-glutamate: step 2/2. In terms of biological role, catalyzes the NADPH-dependent reduction of L-glutamate 5-phosphate into L-glutamate 5-semialdehyde and phosphate. The product spontaneously undergoes cyclization to form 1-pyrroline-5-carboxylate. The sequence is that of Gamma-glutamyl phosphate reductase from Synechococcus sp. (strain CC9902).